We begin with the raw amino-acid sequence, 638 residues long: ABC transporter G family member 12 (638 aa).

Residues 42–61 (KQEKAKKKNDTESSTGDMNT) are disordered. The 244-residue stretch at 58–301 (DMNTGVSTTI…SLGYPCPNNT (244 aa)) folds into the ABC transporter domain. 91–98 (GPSGSGKS) contacts ATP. Positions 374–633 (GNFVARVGTA…WTSYLALHFL (260 aa)) constitute an ABC transmembrane type-2 domain. 7 consecutive transmembrane segments (helical) span residues 376–396 (FVARVGTAVVTGLLFGVCFAG), 410–430 (TIFFLITGLNLTPFAVISLFL), 459–479 (TLIVFLVALINAAICYLFAHL), 484–504 (GHFFFAIMVYFFVHLLSDFMI), 516–536 (MTFAYGSGLSVIYMLFAGFYV), 544–564 (SFGWLHWVNPLFYSFVSLVVN), and 612–632 (FGVVVAWTVFFFWTSYLALHF).

The protein belongs to the ABC transporter superfamily. ABCG family. Eye pigment precursor importer (TC 3.A.1.204) subfamily.

It is found in the membrane. This chain is ABC transporter G family member 12 (abcG12), found in Dictyostelium discoideum (Social amoeba).